We begin with the raw amino-acid sequence, 124 residues long: Large ribosomal subunit protein bL36m (124 aa).

Belongs to the bacterial ribosomal protein bL36 family. As to quaternary structure, component of the mitochondrial large ribosomal subunit (mt-LSU). Mature N.crassa 74S mitochondrial ribosomes consist of a small (37S) and a large (54S) subunit. The 37S small subunit contains a 16S ribosomal RNA (16S mt-rRNA) and 32 different proteins. The 54S large subunit contains a 23S rRNA (23S mt-rRNA) and 42 different proteins. bL36m has a zinc binding site.

The protein resides in the mitochondrion. In terms of biological role, component of the mitochondrial ribosome (mitoribosome), a dedicated translation machinery responsible for the synthesis of mitochondrial genome-encoded proteins, including at least some of the essential transmembrane subunits of the mitochondrial respiratory chain. The mitoribosomes are attached to the mitochondrial inner membrane and translation products are cotranslationally integrated into the membrane. This is Large ribosomal subunit protein bL36m (rtc6) from Neurospora crassa (strain ATCC 24698 / 74-OR23-1A / CBS 708.71 / DSM 1257 / FGSC 987).